Reading from the N-terminus, the 540-residue chain is Maintenance of mitochondrial morphology protein 1 (540 aa).

Residues 1–25 lie on the Lumenal side of the membrane; sequence MAGPSNQTQPPPPVLTQPSLSFTQG. Residues 26–46 traverse the membrane as a helical segment; it reads LLVGQLSVVLLIGAFIKFFIF. The Cytoplasmic portion of the chain corresponds to 47–540; the sequence is GEAPPHPSRN…GSMPDPVVVT (494 aa). Disordered regions lie at residues 52-135, 275-331, 416-471, and 509-540; these read HPSR…SHQP, GPGT…ATAA, GRTG…GGSM, and YGGA…VVVT. Composition is skewed to polar residues over residues 69–81, 88–105, and 112–121; these read YSLN…SSPR, STSN…NTRS, and YSATPTNPTS. Over residues 122-132 the composition is skewed to basic residues; that stretch reads KHSRSRPHHSS. Residues 134 to 409 form the SMP-LTD domain; that stretch reads QPESLDWFNV…EPRVQVVGLP (276 aa). Residues 321 to 331 show a composition bias toward low complexity; it reads TNTNTAGATAA. Composition is skewed to gly residues over residues 442-471 and 511-521; these read TAGG…GGSM and GAQGGGGGGGR.

Belongs to the MMM1 family. In terms of assembly, homodimer. Component of the ER-mitochondria encounter structure (ERMES) or MDM complex, composed of MMM1, MDM10, MDM12 and MDM34. An MMM1 homodimer associates with one molecule of MDM12 on each side in a pairwise head-to-tail manner, and the SMP-LTD domains of MMM1 and MDM12 generate a continuous hydrophobic tunnel for phospholipid trafficking.

Its subcellular location is the endoplasmic reticulum membrane. In terms of biological role, component of the ERMES/MDM complex, which serves as a molecular tether to connect the endoplasmic reticulum (ER) and mitochondria. Components of this complex are involved in the control of mitochondrial shape and protein biogenesis, and function in nonvesicular lipid trafficking between the ER and mitochondria. The MDM12-MMM1 subcomplex functions in the major beta-barrel assembly pathway that is responsible for biogenesis of all outer membrane beta-barrel proteins, and acts in a late step after the SAM complex. The MDM10-MDM12-MMM1 subcomplex further acts in the TOM40-specific pathway after the action of the MDM12-MMM1 complex. Essential for establishing and maintaining the structure of mitochondria and maintenance of mtDNA nucleoids. The chain is Maintenance of mitochondrial morphology protein 1 from Blastomyces gilchristii (strain SLH14081) (Blastomyces dermatitidis).